The primary structure comprises 441 residues: ATP-dependent RNA helicase sub2 (441 aa).

Low complexity predominate over residues 19–29 (DAAATTAAPAA). The interval 19–43 (DAAATTAAPAANGAQDKKGDLTVSG) is disordered. The short motif at 58-86 (TGFRDFLLKGELLRAITDCGFEHPSEVQQ) is the Q motif element. A Helicase ATP-binding domain is found at 89-264 (IPTAILNVDV…KKFMRNPLEV (176 aa)). 102 to 109 (AKSGLGKT) contacts ATP. A DEAD box motif is present at residues 211-214 (DECD). Positions 276-437 (GLQQYYIKLS…EYPEGGVDSS (162 aa)) constitute a Helicase C-terminal domain.

This sequence belongs to the DEAD box helicase family. DECD subfamily.

It localises to the nucleus. The catalysed reaction is ATP + H2O = ADP + phosphate + H(+). ATP-binding RNA helicase involved in transcription elongation and required for the export of mRNA out of the nucleus. SUB2 also plays a role in pre-mRNA splicing and spliceosome assembly. May be involved in rDNA and telomeric silencing, and maintenance of genome integrity. This is ATP-dependent RNA helicase sub2 (sub2) from Aspergillus clavatus (strain ATCC 1007 / CBS 513.65 / DSM 816 / NCTC 3887 / NRRL 1 / QM 1276 / 107).